The chain runs to 436 residues: Enolase (436 aa).

Position 167 (glutamine 167) interacts with (2R)-2-phosphoglycerate. Glutamate 209 (proton donor) is an active-site residue. Positions 246, 291, and 318 each coordinate Mg(2+). Residues lysine 343, arginine 372, serine 373, and lysine 394 each contribute to the (2R)-2-phosphoglycerate site. The active-site Proton acceptor is the lysine 343.

This sequence belongs to the enolase family. Component of the RNA degradosome, a multiprotein complex involved in RNA processing and mRNA degradation. Requires Mg(2+) as cofactor.

It localises to the cytoplasm. The protein localises to the secreted. Its subcellular location is the cell surface. The catalysed reaction is (2R)-2-phosphoglycerate = phosphoenolpyruvate + H2O. Its pathway is carbohydrate degradation; glycolysis; pyruvate from D-glyceraldehyde 3-phosphate: step 4/5. Functionally, catalyzes the reversible conversion of 2-phosphoglycerate (2-PG) into phosphoenolpyruvate (PEP). It is essential for the degradation of carbohydrates via glycolysis. This chain is Enolase, found in Actinobacillus pleuropneumoniae serotype 3 (strain JL03).